A 125-amino-acid polypeptide reads, in one-letter code: Fluoride-specific ion channel FluC (125 aa).

Helical transmembrane passes span 1–21, 32–52, 68–88, and 101–121; these read MIQAILVAFGGAIGSVLRYYV, AFPWGTLAVNVVGCFVIGVFA, LLITGFLGGFTTFSAFSLDAI, and IYIAASVGLSMAAVIAGLAVM. Na(+) contacts are provided by Gly75 and Thr78.

Belongs to the fluoride channel Fluc/FEX (TC 1.A.43) family.

The protein resides in the cell inner membrane. The enzyme catalyses fluoride(in) = fluoride(out). With respect to regulation, na(+) is not transported, but it plays an essential structural role and its presence is essential for fluoride channel function. Its function is as follows. Fluoride-specific ion channel. Important for reducing fluoride concentration in the cell, thus reducing its toxicity. This is Fluoride-specific ion channel FluC from Rhizobium johnstonii (strain DSM 114642 / LMG 32736 / 3841) (Rhizobium leguminosarum bv. viciae).